The following is a 467-amino-acid chain: MTCRTRFAPSPTGYLHIGGARTALYCWLEARHRGGQFVLRIEDTDRERSTQEAIDAILEAMDWLGLGYDEGPIYQTQRVARYQEVAEQLLAQGKAYYAYETREELDAMREAAMAKQEKPRYNGAAREQNLPYRDDPNRVIRFKNPVGGTVVFDDLIKGRIEIANSELDDMVIFRPDGFPTYNFAVVVDDWDMGITEVIRGDDHINNTPRQINIYEALDAPVPKFAHMPMILDEQGAKLSKRTGAADVMQYKDAGYLPHALINYLARLGWSHGDQELFTQQELLDLFDVKDVNSKAARLDMAKLGWVNQHYLKTDDPASIAPQLEYQLAKLGVDIAAGPAAADVVVALRERVQTLKEMAEKAVVWYQPLETYDEAAVMKHLKLGAEVPLGKARELLAAVDAWSVESVSAALHDAAAALELGMGKVAQPLRVAITGTQVSPDISQTVYLAGREGALKRIDAALIKIGAA.

The 'HIGH' region motif lies at 9-19 (PSPTGYLHIGG). Positions 237 to 241 (KLSKR) match the 'KMSKS' region motif. Residue Lys240 coordinates ATP.

The protein belongs to the class-I aminoacyl-tRNA synthetase family. Glutamate--tRNA ligase type 1 subfamily. As to quaternary structure, monomer.

It is found in the cytoplasm. The catalysed reaction is tRNA(Glu) + L-glutamate + ATP = L-glutamyl-tRNA(Glu) + AMP + diphosphate. Functionally, catalyzes the attachment of glutamate to tRNA(Glu) in a two-step reaction: glutamate is first activated by ATP to form Glu-AMP and then transferred to the acceptor end of tRNA(Glu). This Xanthomonas axonopodis pv. citri (strain 306) protein is Glutamate--tRNA ligase.